Reading from the N-terminus, the 60-residue chain is MAVQQNKKSRSARDMRRSHDALEPNALSVEKSTGEVHLRHHVSPDGFYRGRKVIDKGADE.

Residues 1 to 60 (MAVQQNKKSRSARDMRRSHDALEPNALSVEKSTGEVHLRHHVSPDGFYRGRKVIDKGADE) form a disordered region. The span at 11–22 (SARDMRRSHDAL) shows a compositional bias: basic and acidic residues.

It belongs to the bacterial ribosomal protein bL32 family.

The chain is Large ribosomal subunit protein bL32 from Stutzerimonas stutzeri (strain A1501) (Pseudomonas stutzeri).